The sequence spans 98 residues: C-X-C motif chemokine 10 (98 aa).

A signal peptide spans 1 to 21 (MNQTAILICCLVFLTLSGIQG). Arginine 26 bears the Citrulline mark. Intrachain disulfides connect cysteine 30–cysteine 57 and cysteine 32–cysteine 74.

It belongs to the intercrine alpha (chemokine CxC) family.

It localises to the secreted. In terms of biological role, chemotactic for monocytes and T-lymphocytes. Binds to CXCR3. The polypeptide is C-X-C motif chemokine 10 (CXCL10) (Macaca nemestrina (Pig-tailed macaque)).